We begin with the raw amino-acid sequence, 450 residues long: Phosphomethylpyrimidine synthase (450 aa).

Residues N80, M109, Y138, H173, 193–195, 234–237, and E273 contribute to the substrate site; these read SRG and DSLR. A Zn(2+)-binding site is contributed by H277. Y300 serves as a coordination point for substrate. H341 lines the Zn(2+) pocket. [4Fe-4S] cluster is bound by residues C421, C424, and C429.

This sequence belongs to the ThiC family. In terms of assembly, homodimer. [4Fe-4S] cluster is required as a cofactor.

The enzyme catalyses 5-amino-1-(5-phospho-beta-D-ribosyl)imidazole + S-adenosyl-L-methionine = 4-amino-2-methyl-5-(phosphooxymethyl)pyrimidine + CO + 5'-deoxyadenosine + formate + L-methionine + 3 H(+). It participates in cofactor biosynthesis; thiamine diphosphate biosynthesis. Its function is as follows. Catalyzes the synthesis of the hydroxymethylpyrimidine phosphate (HMP-P) moiety of thiamine from aminoimidazole ribotide (AIR) in a radical S-adenosyl-L-methionine (SAM)-dependent reaction. The polypeptide is Phosphomethylpyrimidine synthase (Campylobacter fetus subsp. fetus (strain 82-40)).